A 59-amino-acid polypeptide reads, in one-letter code: Small integral membrane protein 30 (59 aa).

The N-terminal stretch at 1-24 (MNSVSTQLILVLASLLLILPVVEA) is a signal peptide. Topologically, residues 25-29 (VEAGD) are extracellular. A helical membrane pass occupies residues 30-50 (AIALLLGVVLSITGICACLGI). The Cytoplasmic portion of the chain corresponds to 51-59 (YARKRNGQM).

In terms of assembly, interacts (via transmembrane domain) with antiviral protein MAVS (via transmembrane domain); the interaction disrupts MAVS interaction with RIGI and inhibits MAVS aggregation, resulting in the repression of type I interferon signaling and innate immune responses.

The protein localises to the endoplasmic reticulum membrane. Its subcellular location is the mitochondrion membrane. Its function is as follows. Negatively regulates antiviral innate immune responses. Disrupts the interaction of antiviral protein MAVS with innate immune receptor RIGI and inhibits MAVS aggregation, resulting in the repression of type I interferon signaling and innate immune responses. This is Small integral membrane protein 30 from Mus musculus (Mouse).